The chain runs to 299 residues: uncharacterized protein (299 aa).

Residues 25-45 (LLYFFKSLAMILFFIFFSLTS) traverse the membrane as a helical segment.

It is found in the membrane. This is an uncharacterized protein from Rickettsia prowazekii (strain Madrid E).